We begin with the raw amino-acid sequence, 445 residues long: Canavalin (445 aa).

A signal peptide spans 1-26 (MAFSARFPLWLLLGVVLLASVSASFA). Cupin type-1 domains are found at residues 49 to 207 (YLFR…DEIE) and 249 to 407 (FNLR…EEVE).

This sequence belongs to the 7S seed storage protein family. In terms of assembly, homotrimer.

Seed storage protein. In Canavalia gladiata (Sword bean), this protein is Canavalin.